A 101-amino-acid chain; its full sequence is MGIRYLLVLVLVLLVLGCEVQGAHMPQQDEATSSSLFTQMQESFYGYWGIAKSAVQGLYEKTYLTTMDEKIREIYNKSTAAVSTYAGIFTDQLLSMLKGDQ.

The signal sequence occupies residues 1–22; the sequence is MGIRYLLVLVLVLLVLGCEVQG. A propeptide spanning residues 23 to 28 is cleaved from the precursor; the sequence is AHMPQQ. The segment at 66–74 is lipid binding; the sequence is TMDEKIREI. A lipoprotein lipase cofactor region spans residues 78-101; it reads STAAVSTYAGIFTDQLLSMLKGDQ.

The protein belongs to the apolipoprotein C2 family. Post-translationally, proapolipoprotein C-II is synthesized as a sialic acid containing glycoprotein which is subsequently desialylated prior to its proteolytic processing. In terms of processing, proapolipoprotein C-II, the major form found in plasma undergoes proteolytic cleavage of its N-terminal hexapeptide to generate apolipoprotein C-II, which occurs as the minor form in plasma.

It is found in the secreted. In terms of biological role, component of chylomicrons, very low-density lipoproteins (VLDL), low-density lipoproteins (LDL), and high-density lipoproteins (HDL) in plasma. Plays an important role in lipoprotein metabolism as an activator of lipoprotein lipase. Both proapolipoprotein C-II and apolipoprotein C-II can activate lipoprotein lipase. The protein is Apolipoprotein C-II (APOC2) of Neomonachus schauinslandi (Hawaiian monk seal).